Here is a 292-residue protein sequence, read N- to C-terminus: Ribosomal protein L11 methyltransferase (292 aa).

Thr144, Gly165, Asp187, and Asn229 together coordinate S-adenosyl-L-methionine.

Belongs to the methyltransferase superfamily. PrmA family.

It localises to the cytoplasm. It catalyses the reaction L-lysyl-[protein] + 3 S-adenosyl-L-methionine = N(6),N(6),N(6)-trimethyl-L-lysyl-[protein] + 3 S-adenosyl-L-homocysteine + 3 H(+). Functionally, methylates ribosomal protein L11. The polypeptide is Ribosomal protein L11 methyltransferase (Pseudomonas fluorescens (strain Pf0-1)).